The following is a 456-amino-acid chain: Alcohol acyltransferase 16 (456 aa).

Catalysis depends on proton acceptor residues His-167 and Asp-382.

It belongs to the plant acyltransferase family. Expressed in fruit.

The catalysed reaction is 3-(methylsulfanyl)propanoyl-CoA + butan-1-ol = butyl 3-(methylsulfanyl)propanoate + CoA. It catalyses the reaction ethanol + benzoyl-CoA = ethyl benzoate + CoA. It carries out the reaction butan-1-ol + benzoyl-CoA = butyl benzoate + CoA. The enzyme catalyses 2-(methylsulfanyl)acetyl-CoA + butan-1-ol = butyl 2-(methylsulfanyl)acetate + CoA. Involved in the biosynthesis of volatile esters which confer kiwifruit flavor. Alcohol acyl transferase that can use a wide range of alcohols as substrate to produce esters. Exhibits benzoyl-CoA:alcohol O-acyltransferase activity. This chain is Alcohol acyltransferase 16, found in Actinidia chinensis var. chinensis (Chinese soft-hair kiwi).